Reading from the N-terminus, the 325-residue chain is Heat-inducible transcription repressor HrcA (325 aa).

Belongs to the HrcA family.

Its function is as follows. Negative regulator of class I heat shock genes (grpE-dnaK-dnaJ and groELS operons). Prevents heat-shock induction of these operons. This Staphylococcus aureus (strain JH1) protein is Heat-inducible transcription repressor HrcA.